The sequence spans 516 residues: Exoglucanase 1 (516 aa).

The N-terminal stretch at 1–17 (MRASLLAFSLAAAVAGG) is a signal peptide. Residues 18 to 445 (QQAGTLTAKR…GHLGISPFSG (428 aa)) are catalytic. An N-linked (GlcNAc...) asparagine glycan is attached at Asn45. The active-site Nucleophile is Glu223. Glu228 (proton donor) is an active-site residue. Asn281 carries N-linked (GlcNAc...) asparagine glycosylation. The interval 444-481 (SGGSSGTPPSNPSSSASPTSSTAKPSSTSTASNPSGTG) is disordered. Residues 446 to 480 (GSSGTPPSNPSSSASPTSSTAKPSSTSTASNPSGT) are linker. Low complexity predominate over residues 449 to 481 (GTPPSNPSSSASPTSSTAKPSSTSTASNPSGTG). Residues 480-516 (TGAAHWAQCGGIGFSGPTTCPEPYTCAKDHDIYSQCV) form the CBM1 domain. 2 cysteine pairs are disulfide-bonded: Cys488–Cys505 and Cys499–Cys515.

It belongs to the glycosyl hydrolase 7 (cellulase C) family.

It is found in the secreted. It catalyses the reaction Hydrolysis of (1-&gt;4)-beta-D-glucosidic linkages in cellulose and cellotetraose, releasing cellobiose from the non-reducing ends of the chains.. This chain is Exoglucanase 1 (cbh-1), found in Neurospora crassa (strain ATCC 24698 / 74-OR23-1A / CBS 708.71 / DSM 1257 / FGSC 987).